Reading from the N-terminus, the 230-residue chain is LexA repressor (230 aa).

Positions 1–21 (MSDDSSETRTGGRRGADAGLT) are disordered. The H-T-H motif DNA-binding region spans 44-64 (IREIGDAVGLTSTSSVAHQLR). Active-site for autocatalytic cleavage activity residues include serine 154 and lysine 191.

The protein belongs to the peptidase S24 family. As to quaternary structure, homodimer.

The catalysed reaction is Hydrolysis of Ala-|-Gly bond in repressor LexA.. Functionally, represses a number of genes involved in the response to DNA damage (SOS response), including recA and lexA. In the presence of single-stranded DNA, RecA interacts with LexA causing an autocatalytic cleavage which disrupts the DNA-binding part of LexA, leading to derepression of the SOS regulon and eventually DNA repair. The polypeptide is LexA repressor (Mycobacterium sp. (strain JLS)).